An 822-amino-acid polypeptide reads, in one-letter code: Collagen alpha chain CG42342 (822 aa).

2 disordered regions span residues 1-45 (MRKH…VEAP) and 66-99 (RLAP…KERP). The Cytoplasmic portion of the chain corresponds to 1-104 (MRKHKAPPSG…SKERPRPTVR (104 aa)). Positions 11 to 25 (SPRTMAQDNSQSEPS) are enriched in polar residues. Residues 76–94 (INNSNNNSNISNNSSNSSS) show a composition bias toward low complexity. A helical; Signal-anchor for type II membrane protein membrane pass occupies residues 105–125 (FISLLHVASYVLCLCAFSFAL). Residues 126–822 (YGNVRQTRLE…EYQDNLHNNE (697 aa)) are Extracellular-facing. The stretch at 131–162 (QTRLEQRMQRLQQLDARIVELELRLEQQQLLH) forms a coiled coil. Disordered stretches follow at residues 169-188 (QVLA…NGSQ), 205-297 (VSHL…GHPG), and 345-822 (LKGE…HNNE). The stretch at 194-222 (VRRELHRLRRDVSHLQLTRRQQRRQAAEA) forms a coiled coil. 7 Collagen-like domains span residues 241–299 (QPGP…PGMD), 350–409 (GEPG…KGDR), 430–469 (GPPG…GKRG), 493–526 (RGPP…PGSL), 527–586 (GPRG…KGDK), 621–680 (GPPG…SGKA), and 681–740 (GIPG…KGEQ). Residues 242 to 251 (PGPPGPPGPP) are compositionally biased toward pro residues. Residues 284–293 (PGDKGQKGDV) show a composition bias toward basic and acidic residues. The segment covering 360–402 (EAGQPGAPGERGPPGEIGAQGPQGEAGQPGVAGPPGVAGAPGT) has biased composition (low complexity). Over residues 403-412 (KGDKGDRGDR) the composition is skewed to basic and acidic residues. Residues 431–443 (PPGPAGPPGPPGE) show a composition bias toward pro residues. The segment covering 504-517 (KDGRDGRDGSKGEP) has biased composition (basic and acidic residues). Positions 522 to 540 (EPGSLGPRGLDGLPGEPGI) are enriched in low complexity. Over residues 567 to 579 (LMGPPGLPGPPGY) the composition is skewed to pro residues. Positions 583–602 (KGDKGDRGDSYRKMRRRQDD) are enriched in basic and acidic residues. The span at 619–628 (PPGPPGPMGP) shows a compositional bias: pro residues. Residues 638–655 (RGLDGRKGDPGEKGHKGD) are compositionally biased toward basic and acidic residues. Positions 658–668 (PMGLPGPMGMR) are enriched in low complexity. Residues 790–822 (TSDYEQEEEEDDEQAEDNENEYDEYQDNLHNNE) are a coiled coil. The span at 793–815 (YEQEEEEDDEQAEDNENEYDEYQ) shows a compositional bias: acidic residues.

The protein resides in the cell membrane. This is Collagen alpha chain CG42342 from Drosophila melanogaster (Fruit fly).